The sequence spans 79 residues: CDC42 small effector protein 1 (79 aa).

2 S-palmitoyl cysteine lipidation sites follow: Cys-10 and Cys-11. The CRIB domain maps to 30–43 (IGEPMNFVHLTHIG). Residues 48-79 (GAGDGLAMTGAVQEQMRSKGNRDRPWSNSRAL) are disordered. Over residues 63–72 (MRSKGNRDRP) the composition is skewed to basic and acidic residues.

This sequence belongs to the CDC42SE/SPEC family. In terms of assembly, interacts with CDC42 (in GTP-bound form). Interacts weakly with RAC1 and not at all with RHOA.

The protein resides in the cytoplasm. It localises to the cytoskeleton. The protein localises to the cell membrane. Functionally, probably involved in the organization of the actin cytoskeleton by acting downstream of CDC42, inducing actin filament assembly. Alters CDC42-induced cell shape changes. In activated T-cells, may play a role in CDC42-mediated F-actin accumulation at the immunological synapse. May play a role in early contractile events in phagocytosis in macrophages. The sequence is that of CDC42 small effector protein 1 (Cdc42se1) from Rattus norvegicus (Rat).